A 218-amino-acid polypeptide reads, in one-letter code: Ribose-5-phosphate isomerase A (218 aa).

Substrate is bound by residues K7, 28-31 (TGST), 81-84 (DGAD), and 94-97 (KGGG). Residue E103 is the Proton acceptor of the active site. K121 contacts substrate.

This sequence belongs to the ribose 5-phosphate isomerase family. As to quaternary structure, homodimer.

It catalyses the reaction aldehydo-D-ribose 5-phosphate = D-ribulose 5-phosphate. It participates in carbohydrate degradation; pentose phosphate pathway; D-ribose 5-phosphate from D-ribulose 5-phosphate (non-oxidative stage): step 1/1. Catalyzes the reversible conversion of ribose-5-phosphate to ribulose 5-phosphate. This Vibrio vulnificus (strain YJ016) protein is Ribose-5-phosphate isomerase A.